Reading from the N-terminus, the 333-residue chain is Ketol-acid reductoisomerase (NADP(+)) (333 aa).

In terms of domain architecture, KARI N-terminal Rossmann spans 2-182; the sequence is AELFYDDDAD…GGTRAGVIKT (181 aa). NADP(+) is bound by residues 25–28, Ser-51, Ser-53, and 83–86; these read YGSQ and DPIQ. The active site involves His-108. Gly-134 provides a ligand contact to NADP(+). The region spanning 183–328 is the KARI C-terminal knotted domain; it reads TFTEETETDL…RELRKLMSWV (146 aa). Mg(2+)-binding residues include Asp-191, Glu-195, Glu-227, and Glu-231. Substrate is bound at residue Ser-252.

Belongs to the ketol-acid reductoisomerase family. Mg(2+) is required as a cofactor.

The enzyme catalyses (2R)-2,3-dihydroxy-3-methylbutanoate + NADP(+) = (2S)-2-acetolactate + NADPH + H(+). It catalyses the reaction (2R,3R)-2,3-dihydroxy-3-methylpentanoate + NADP(+) = (S)-2-ethyl-2-hydroxy-3-oxobutanoate + NADPH + H(+). The protein operates within amino-acid biosynthesis; L-isoleucine biosynthesis; L-isoleucine from 2-oxobutanoate: step 2/4. Its pathway is amino-acid biosynthesis; L-valine biosynthesis; L-valine from pyruvate: step 2/4. In terms of biological role, involved in the biosynthesis of branched-chain amino acids (BCAA). Catalyzes an alkyl-migration followed by a ketol-acid reduction of (S)-2-acetolactate (S2AL) to yield (R)-2,3-dihydroxy-isovalerate. In the isomerase reaction, S2AL is rearranged via a Mg-dependent methyl migration to produce 3-hydroxy-3-methyl-2-ketobutyrate (HMKB). In the reductase reaction, this 2-ketoacid undergoes a metal-dependent reduction by NADPH to yield (R)-2,3-dihydroxy-isovalerate. This chain is Ketol-acid reductoisomerase (NADP(+)), found in Streptomyces griseus subsp. griseus (strain JCM 4626 / CBS 651.72 / NBRC 13350 / KCC S-0626 / ISP 5235).